We begin with the raw amino-acid sequence, 350 residues long: Cell division protein ZipA (350 aa).

Over 1–6 (MEDLQL) the chain is Periplasmic. The helical transmembrane segment at 7–27 (VLFVLGAIAIVAVLVHGFWSI) threads the bilayer. Residues 28-350 (RKQQPRTIKE…QYLARIRANA (323 aa)) lie on the Cytoplasmic side of the membrane. 3 disordered regions span residues 36 to 55 (KEQP…AEGF), 65 to 136 (VRKL…PSAR), and 187 to 213 (RVPA…EEPL). Basic and acidic residues-rich tracts occupy residues 65–109 (VRKL…ESRA) and 116–131 (AAHE…HEEP).

Belongs to the ZipA family. Interacts with FtsZ via their C-terminal domains.

It localises to the cell inner membrane. In terms of biological role, essential cell division protein that stabilizes the FtsZ protofilaments by cross-linking them and that serves as a cytoplasmic membrane anchor for the Z ring. Also required for the recruitment to the septal ring of downstream cell division proteins. This chain is Cell division protein ZipA, found in Shewanella amazonensis (strain ATCC BAA-1098 / SB2B).